We begin with the raw amino-acid sequence, 65 residues long: UPF0370 protein Ent638_2968 (65 aa).

A helical transmembrane segment spans residues 4–24; sequence LSKYWWILVLVFLVGVLLNVI. Residues 39–65 are disordered; that stretch reads KPELPPHRDFNDKWDDDDNWPKKDQKK. The span at 42–65 shows a compositional bias: basic and acidic residues; sequence LPPHRDFNDKWDDDDNWPKKDQKK.

It belongs to the UPF0370 family.

It is found in the cell membrane. The chain is UPF0370 protein Ent638_2968 from Enterobacter sp. (strain 638).